Consider the following 488-residue polypeptide: Arginine biosynthesis bifunctional protein ArgJ, mitochondrial (488 aa).

The substrate site is built by Thr227, Lys250, Thr261, Glu340, Asn483, and Ser488. Thr261 serves as the catalytic Nucleophile.

Belongs to the ArgJ family. In terms of assembly, heterodimer of an alpha and a beta chain. Post-translationally, the alpha and beta chains are autoproteolytically processed from a single precursor protein within the mitochondrion.

It is found in the mitochondrion matrix. The catalysed reaction is N(2)-acetyl-L-ornithine + L-glutamate = N-acetyl-L-glutamate + L-ornithine. It carries out the reaction L-glutamate + acetyl-CoA = N-acetyl-L-glutamate + CoA + H(+). It functions in the pathway amino-acid biosynthesis; L-arginine biosynthesis; L-ornithine and N-acetyl-L-glutamate from L-glutamate and N(2)-acetyl-L-ornithine (cyclic): step 1/1. Its pathway is amino-acid biosynthesis; L-arginine biosynthesis; N(2)-acetyl-L-ornithine from L-glutamate: step 1/4. Functionally, catalyzes two activities which are involved in the cyclic version of arginine biosynthesis: the synthesis of acetylglutamate from glutamate and acetyl-CoA, and of ornithine by transacetylation between acetylornithine and glutamate. In Thalassiosira pseudonana (Marine diatom), this protein is Arginine biosynthesis bifunctional protein ArgJ, mitochondrial.